The chain runs to 1278 residues: Cytoplasmic FMR1-interacting protein 2 (1278 aa).

The residue at position 1062 (Lys1062) is an N6-acetyllysine.

Belongs to the CYFIP family. Component of the WAVE1 complex composed of ABI2, CYFIP2, BRK1, NCKAP1 and WASF1/WAVE1. Interacts with FMR1, FXR1 and FXR2. Interacts with FMR1 isoform 6; the interaction occurs in a RNA-dependent manner. Interacts with RAC1 (activated form) which causes the complex to dissociate, releasing activated WASF1. The complex can also be activated by NCK1. Interacts with SHANK3; the interaction mediates the association of SHANK3 with the WAVE1 complex. Interacts with TMEM108 (via N-terminus); the interaction associates TMEM108 with the WAVE1 complex. In terms of tissue distribution, expressed in T-cells. Increased expression is observed in CD4(+) T-lymphocytes from patients with multiple sclerosis (at protein level).

The protein localises to the cytoplasm. The protein resides in the nucleus. It localises to the perinuclear region. Its subcellular location is the synapse. It is found in the synaptosome. In terms of biological role, involved in T-cell adhesion and p53/TP53-dependent induction of apoptosis. Does not bind RNA. As component of the WAVE1 complex, required for BDNF-NTRK2 endocytic trafficking and signaling from early endosomes. This chain is Cytoplasmic FMR1-interacting protein 2, found in Homo sapiens (Human).